The sequence spans 22 residues: Dioicin-1 (22 aa).

It is found in the secreted. The protein localises to the extracellular space. The protein resides in the golgi apparatus. Its subcellular location is the vacuole. The catalysed reaction is Endohydrolysis of the N-glycosidic bond at one specific adenosine on the 28S rRNA.. In terms of biological role, nicks pBR322 dsDNA. Has adenine polynucleotide glycosidase activity on herring sperm ssDNA. This Phytolacca dioica (Bella sombra tree) protein is Dioicin-1.